Consider the following 885-residue polypeptide: Alanine--tRNA ligase (885 aa).

Zn(2+) is bound by residues His-563, His-567, Cys-677, and His-681. Residues 848–868 are disordered; sequence LGGKGGGGRPDRAQGGAPSLA.

This sequence belongs to the class-II aminoacyl-tRNA synthetase family. Zn(2+) is required as a cofactor.

Its subcellular location is the cytoplasm. It carries out the reaction tRNA(Ala) + L-alanine + ATP = L-alanyl-tRNA(Ala) + AMP + diphosphate. Its function is as follows. Catalyzes the attachment of alanine to tRNA(Ala) in a two-step reaction: alanine is first activated by ATP to form Ala-AMP and then transferred to the acceptor end of tRNA(Ala). Also edits incorrectly charged Ser-tRNA(Ala) and Gly-tRNA(Ala) via its editing domain. The chain is Alanine--tRNA ligase from Paracoccus denitrificans (strain Pd 1222).